Reading from the N-terminus, the 1175-residue chain is MSQGFRGPTGVFPHQTQPCLDPSYEHSKWRYLQPRGSESYLRSFQLQQIEFLKGRLPEAPLIGAQTQSLPPFLPGHWPRFPGPPAQGKQPEIWGFPRSVTLRNQGFHIGPPLPPPHSRGPPWRGAEGLCSHFQELSISQNPEQKVLNRLEELGEGKATTAYALARELRTPKKDINRILYSLERKGKLHRGVGKPPLWSLVPLSQACTQPPRAVNSDKEVPRGEPDLDSEDGDPASDLEGPSELLDMAEIKEKICDYLFNVSKSSALNLAKNIGLAKARDVNAVLIDLERQGDVYREGATPPIWYLTDKKRERLQMKRSTHSGPAATPAAVSEATQSTSFPTCHPPQSGGSSSMATSKRVENGQEPVTKYESRHEARPGPVRLRPHAYHNGPSRAGYVASENGPWATDDIPDNLNSIHTAPGEFRAIMEMPSFYSPTLPRCSPYKKLTECQLKNPVSGLLEYAQFTSQTCDFNLIEQSGPSHEPRFKFQVVINGREFPPAEAGSKKVAKQDAAVKAMAILLREAKAKDSGQPEELSNCPMEEDPEKPAESQPPSSSATSLFSGKSPVTTLLECMHKLGNSCEFRLLSKEGPAHDPKFQYCVAVGAQTFPSVSAPSKKVAKQMAAEEAMKALQEEAANSADDQSGGANTDSLDESVAPNKIRRIGELVRYLNTNPVGGLLEYARSHGFAAEFKLIDQSGPPHEPKFVYQAKVGGRWFPAVCAHSKKQGKQDAADAALRVLIGESEKAEQLGFAEVTPVTGASLRRTMLLLSRSPDAHPKTLPLTGSTFHDQIAMLSHRCFNALTNSFQPSLLGRKILAAIIMKRDPEDMGVVVSLGTGNRCVKGDSLSLKGETVNDCHAEIISRRGFIRFLYSELMKYNHHTAKNSIFELARGGEKLQIKKTVSFHLYISTAPCGDGAHFDKSCSDRAVESTESRHYPVFENPKQGKLRTKVENGEGTIPVESSDIVPTWDGIRLGERLRTMSCSDKILRWNVLGLQGALLTHFLQPVYLKSVTLGYLFSQGHLTRAICCRVTRDGNAFEDGLRYPFIVNHPKVGRVSVYDSKRQSGKTKETSVNWCLADGYDLEILDGTRGTVDGPGKELSRVSKKNIFLQFKKLCSFRARRDLLQLSYGEAKKAARDYDLAKNYFKKSLRDMGYGNWISKPQEEKNFYLCPVPND.

Arg30 and Arg42 each carry asymmetric dimethylarginine. Residues 135–201 (LSISQNPEQK…GKPPLWSLVP (67 aa)) enclose the Z-binding 1 domain. The segment at 135–204 (LSISQNPEQK…PLWSLVPLSQ (70 aa)) is interaction with Z-DNA. A disordered region spans residues 207–239 (TQPPRAVNSDKEVPRGEPDLDSEDGDPASDLEG). The segment covering 214–224 (NSDKEVPRGEP) has biased composition (basic and acidic residues). Over residues 225-235 (DLDSEDGDPAS) the composition is skewed to acidic residues. 2 positions are modified to phosphoserine: Ser228 and Ser235. In terms of domain architecture, Z-binding 2 spans 243–307 (LLDMAEIKEK…ATPPIWYLTD (65 aa)). Residues 315–384 (MKRSTHSGPA…ARPGPVRLRP (70 aa)) form a disordered region. Basic and acidic residues predominate over residues 357–376 (KRVENGQEPVTKYESRHEAR). A Glycyl lysine isopeptide (Lys-Gly) (interchain with G-Cter in SUMO); alternate cross-link involves residue Lys368. Lys368 is covalently cross-linked (Glycyl lysine isopeptide (Lys-Gly) (interchain with G-Cter in SUMO1); alternate). A Glycyl lysine isopeptide (Lys-Gly) (interchain with G-Cter in SUMO2); alternate cross-link involves residue Lys368. Ser431 carries the post-translational modification Phosphoserine. The 69-residue stretch at 453-521 (NPVSGLLEYA…AVKAMAILLR (69 aa)) folds into the DRBM 1 domain. The interval 524–561 (KAKDSGQPEELSNCPMEEDPEKPAESQPPSSSATSLFS) is disordered. The segment covering 550–561 (QPPSSSATSLFS) has biased composition (polar residues). Phosphoserine occurs at positions 564, 579, and 586. A DRBM 2 domain is found at 564–632 (SPVTTLLECM…AEEAMKALQE (69 aa)). The disordered stretch occupies residues 632–652 (EEAANSADDQSGGANTDSLDE). Polar residues predominate over residues 638-648 (ADDQSGGANTD). Residues 662–671 (IGELVRYLNT) form an N-terminal extension of DRBM 3 and constituent of a bi-partite nuclear localization signal region. In terms of domain architecture, DRBM 3 spans 672-740 (NPVGGLLEYA…ADAALRVLIG (69 aa)). Positions 741 to 747 (ESEKAEQ) are C-terminal extension of DRBM 3 and constituent of a bi-partite nuclear localization signal. Thr754 is modified (phosphothreonine). Phosphoserine is present on residues Ser760, Ser769, and Ser771. Lys821 participates in a covalent cross-link: Glycyl lysine isopeptide (Lys-Gly) (interchain with G-Cter in SUMO2). The 336-residue stretch at 832-1167 (SLGTGNRCVK…ISKPQEEKNF (336 aa)) folds into the A to I editase domain. His856 is a binding site for Zn(2+). Residue Glu858 is the Proton donor of the active site. Zn(2+) is bound by residues Cys912 and Cys982.

As to quaternary structure, homodimer. Homodimerization is essential for its catalytic activity. Isoform 5 can form heterodimers with ADARB1/ADAR2. Isoform 1 interacts with ILF2/NF45 and ILF3/NF90. Binding to ILF3/NF90 up-regulates ILF3-mediated gene expression. Isoform 1 and isoform 5 (via DRBM 3 domain) interact with TNPO1. Isoform 5 (via DRBM domains) interacts with XPO5. Isoform 1 and isoform 5 can interact with EIF2AK2/PKR and UPF1. Sumoylation reduces RNA-editing activity. Detected in brain.

The protein localises to the cytoplasm. Its subcellular location is the nucleus. The enzyme catalyses adenosine in double-stranded RNA + H2O + H(+) = inosine in double-stranded RNA + NH4(+). Functionally, catalyzes the hydrolytic deamination of adenosine to inosine in double-stranded RNA (dsRNA) referred to as A-to-I RNA editing. This may affect gene expression and function in a number of ways that include mRNA translation by changing codons and hence the amino acid sequence of proteins; pre-mRNA splicing by altering splice site recognition sequences; RNA stability by changing sequences involved in nuclease recognition; genetic stability in the case of RNA virus genomes by changing sequences during viral RNA replication; and RNA structure-dependent activities such as microRNA production or targeting or protein-RNA interactions. Can edit both viral and cellular RNAs and can edit RNAs at multiple sites (hyper-editing) or at specific sites (site-specific editing). Its cellular RNA substrates include: bladder cancer-associated protein (BLCAP), neurotransmitter receptors for glutamate (GRIA2) and serotonin (HTR2C) and GABA receptor (GABRA3). Site-specific RNA editing of transcripts encoding these proteins results in amino acid substitutions which consequently alters their functional activities. Exhibits low-level editing at the GRIA2 Q/R site, but edits efficiently at the R/G site and HOTSPOT1. Does not affect polyomavirus replication but provides protection against virus-induced cytopathic effects. Essential for embryonic development and cell survival and plays a critical role in the maintenance of hematopoietic stem cells. The sequence is that of Double-stranded RNA-specific adenosine deaminase (Adar) from Rattus norvegicus (Rat).